A 101-amino-acid chain; its full sequence is Small ribosomal subunit protein bS18c (101 aa).

Residues 1–19 (MDKSKQPFRKSKRSFRRRL) show a composition bias toward basic residues. The segment at 1–24 (MDKSKQPFRKSKRSFRRRLPPIGS) is disordered.

It belongs to the bacterial ribosomal protein bS18 family. In terms of assembly, part of the 30S ribosomal subunit.

Its subcellular location is the plastid. The protein resides in the chloroplast. The polypeptide is Small ribosomal subunit protein bS18c (Amborella trichopoda).